The sequence spans 266 residues: ATP synthase subunit a (266 aa).

7 helical membrane passes run 28-48 (ISFT…AIFM), 90-110 (LIFT…VPLF), 125-145 (VTVT…VGFT), 158-178 (HGTP…SFIL), 187-207 (LFVA…FIVN), 216-236 (AFLA…MIGI), and 239-259 (LEFL…SLYL).

Belongs to the ATPase A chain family. F-type ATPases have 2 components, CF(1) - the catalytic core - and CF(0) - the membrane proton channel. CF(1) has five subunits: alpha(3), beta(3), gamma(1), delta(1), epsilon(1). CF(0) has three main subunits: a(1), b(2) and c(9-12). The alpha and beta chains form an alternating ring which encloses part of the gamma chain. CF(1) is attached to CF(0) by a central stalk formed by the gamma and epsilon chains, while a peripheral stalk is formed by the delta and b chains.

It is found in the cell inner membrane. Functionally, key component of the proton channel; it plays a direct role in the translocation of protons across the membrane. The sequence is that of ATP synthase subunit a from Zymomonas mobilis subsp. mobilis (strain ATCC 31821 / ZM4 / CP4).